The chain runs to 285 residues: Hydroxyethylthiazole kinase 1 (285 aa).

Residue M48 participates in substrate binding. 2 residues coordinate ATP: R124 and S183. G210 provides a ligand contact to substrate.

Belongs to the Thz kinase family. The cofactor is Mg(2+).

It carries out the reaction 5-(2-hydroxyethyl)-4-methylthiazole + ATP = 4-methyl-5-(2-phosphooxyethyl)-thiazole + ADP + H(+). It participates in cofactor biosynthesis; thiamine diphosphate biosynthesis; 4-methyl-5-(2-phosphoethyl)-thiazole from 5-(2-hydroxyethyl)-4-methylthiazole: step 1/1. Its function is as follows. Catalyzes the phosphorylation of the hydroxyl group of 4-methyl-5-beta-hydroxyethylthiazole (THZ). This Methanosphaera stadtmanae (strain ATCC 43021 / DSM 3091 / JCM 11832 / MCB-3) protein is Hydroxyethylthiazole kinase 1.